Consider the following 947-residue polypeptide: Bromodomain testis-specific protein (947 aa).

The 107-residue stretch at 27–133 folds into the Bromo 1 domain; it reads RLTNQLQYLQ…KLFVQKLSQM (107 aa). The residue at position 187 (Ser-187) is a Phosphoserine. The Nuclear localization signal signature appears at 209 to 220; it reads KGVKRKADTTTP. One can recognise a Bromo 2 domain in the interval 267-376; that stretch reads VKVTEQLRHC…DVFETHFSKI (110 aa). Disordered regions lie at residues 395–421, 444–512, 610–690, and 849–873; these read ETTG…ERVQ, PFRK…PMNY, NNQL…VKKM, and HLEQ…GLTV. The segment covering 403-413 has biased composition (low complexity); sequence NEASSEGNSSG. Positions 417–470 form a coiled coil; sequence DERVQRLAKLQEQLKAVHQQLQVLSQVPFRKLNKKKEKSKKEKKKEKVNNSNEN. The segment covering 447–462 has biased composition (basic residues); that stretch reads KLNKKKEKSKKEKKKE. The span at 470 to 481 shows a compositional bias: basic and acidic residues; sequence NPRKMCEQMRLK. Over residues 482 to 494 the composition is skewed to basic residues; that stretch reads EKSKRNQPKKRKQ. Residues 500-582 form the NET domain; that stretch reads KSEDEDNAKP…ACLRKRPLKP (83 aa). Residues 631 to 668 are compositionally biased toward low complexity; the sequence is VGSVSRLSESSSSSSSSSESESSSSDLSSSDSSGSESE. 2 stretches are compositionally biased toward basic and acidic residues: residues 674–690 and 849–865; these read TEVK…VKKM and HLEQ…ENQR.

The protein belongs to the BET family. As to quaternary structure, interacts with SMARCE1. Interacts with mRNA splicing machinery proteins SRSF2, DDX5, HNRNPK and TARDBP. Interacts with the acetylated N-terminus of histone H1, H2, H3 and H4. Interacts with P-TEFb components CDK9 and CCNT1/cyclin-T1. Post-translationally, ubiquitinated in a SPOP-dependent manner, leading to proteasomal degradation.

The protein resides in the nucleus. Functionally, testis-specific chromatin protein that specifically binds histone H4 acetylated at 'Lys-5' and 'Lys-8' (H4K5ac and H4K8ac, respectively) and plays a key role in spermatogenesis. Required in late pachytene spermatocytes: plays a role in meiotic and post-meiotic cells by binding to acetylated histones at the promoter of specific meiotic and post-meiotic genes, facilitating their activation at the appropriate time. In the post-meiotic phase of spermatogenesis, binds to hyperacetylated histones and participates in their general removal from DNA. Also recognizes and binds a subset of butyrylated histones: able to bind histone H4 butyrylated at 'Lys-8' (H4K8ac), while it is not able to bind H4 butyrylated at 'Lys-5' (H4K5ac). Also acts as a component of the splicing machinery in pachytene spermatocytes and round spermatids and participates in 3'-UTR truncation of specific mRNAs in post-meiotic spermatids. Required for chromocenter organization, a structure comprised of peri-centromeric heterochromatin. This chain is Bromodomain testis-specific protein (BRDT), found in Macaca fascicularis (Crab-eating macaque).